We begin with the raw amino-acid sequence, 169 residues long: MTSPSSSFWNTASREAMKSGMFVAKVYCFLHVTTNYLGFMAYAYGPSMIPTLHPSGNMLLAERISKRYQKPSRGDIVVIRSPENPNKTPIKRVVGVEGDCISFVIDPVKSDESQTIVVPKGHVFVQGDYTHNSRDSRNFGPVPYGLIQGRVLWRVWPFQDFGPLGPTPT.

Residues serine 47 and lysine 91 contribute to the active site.

The protein belongs to the peptidase S26 family. IMP1 subfamily. In terms of assembly, heterodimer of 2 subunits, IMP1A/B and IMP12.

The protein localises to the mitochondrion inner membrane. In terms of biological role, catalyzes the removal of transit peptides required for the targeting of proteins from the mitochondrial matrix, across the inner membrane, into the inter-membrane space. The polypeptide is Mitochondrial ATP-independent inner membrane protease subunit 1b (Arabidopsis thaliana (Mouse-ear cress)).